Consider the following 120-residue polypeptide: Ribonuclease P protein component (120 aa).

This sequence belongs to the RnpA family. As to quaternary structure, consists of a catalytic RNA component (M1 or rnpB) and a protein subunit.

It carries out the reaction Endonucleolytic cleavage of RNA, removing 5'-extranucleotides from tRNA precursor.. Its function is as follows. RNaseP catalyzes the removal of the 5'-leader sequence from pre-tRNA to produce the mature 5'-terminus. It can also cleave other RNA substrates such as 4.5S RNA. The protein component plays an auxiliary but essential role in vivo by binding to the 5'-leader sequence and broadening the substrate specificity of the ribozyme. The polypeptide is Ribonuclease P protein component (Bordetella avium (strain 197N)).